Consider the following 474-residue polypeptide: tRNA-2-methylthio-N(6)-dimethylallyladenosine synthase (474 aa).

The 118-residue stretch at 3–120 (KKLHIKTWGC…LPEMINSVRG (118 aa)) folds into the MTTase N-terminal domain. The [4Fe-4S] cluster site is built by Cys-12, Cys-49, Cys-83, Cys-157, Cys-161, and Cys-164. In terms of domain architecture, Radical SAM core spans 143–375 (RAEGPTAFVS…QERINQQAMA (233 aa)). The 64-residue stretch at 378–441 (RRMLGTTQRI…PNSLRGKVVR (64 aa)) folds into the TRAM domain.

The protein belongs to the methylthiotransferase family. MiaB subfamily. In terms of assembly, monomer. [4Fe-4S] cluster serves as cofactor.

It is found in the cytoplasm. It catalyses the reaction N(6)-dimethylallyladenosine(37) in tRNA + (sulfur carrier)-SH + AH2 + 2 S-adenosyl-L-methionine = 2-methylsulfanyl-N(6)-dimethylallyladenosine(37) in tRNA + (sulfur carrier)-H + 5'-deoxyadenosine + L-methionine + A + S-adenosyl-L-homocysteine + 2 H(+). Functionally, catalyzes the methylthiolation of N6-(dimethylallyl)adenosine (i(6)A), leading to the formation of 2-methylthio-N6-(dimethylallyl)adenosine (ms(2)i(6)A) at position 37 in tRNAs that read codons beginning with uridine. This Salmonella paratyphi A (strain ATCC 9150 / SARB42) protein is tRNA-2-methylthio-N(6)-dimethylallyladenosine synthase.